The primary structure comprises 198 residues: Na(+)-translocating NADH-quinone reductase subunit E (198 aa).

6 consecutive transmembrane segments (helical) span residues 11 to 31, 39 to 59, 77 to 97, 110 to 130, 140 to 160, and 176 to 196; these read SIFIENLALSFFLGMCTFLAV, MGLGIAVIVVQTVAVPANNLI, FLSFITFIGVIAALVQILEMA, GIFLPLITVNCAIFGGVSFMV, VVYGVGSGAGWMLAIVAMAGI, and LGITFITAGLMALGFMSFSGI.

It belongs to the NqrDE/RnfAE family. As to quaternary structure, composed of six subunits; NqrA, NqrB, NqrC, NqrD, NqrE and NqrF.

The protein resides in the cell inner membrane. The catalysed reaction is a ubiquinone + n Na(+)(in) + NADH + H(+) = a ubiquinol + n Na(+)(out) + NAD(+). In terms of biological role, NQR complex catalyzes the reduction of ubiquinone-1 to ubiquinol by two successive reactions, coupled with the transport of Na(+) ions from the cytoplasm to the periplasm. NqrA to NqrE are probably involved in the second step, the conversion of ubisemiquinone to ubiquinol. This Aeromonas hydrophila subsp. hydrophila (strain ATCC 7966 / DSM 30187 / BCRC 13018 / CCUG 14551 / JCM 1027 / KCTC 2358 / NCIMB 9240 / NCTC 8049) protein is Na(+)-translocating NADH-quinone reductase subunit E.